The following is a 240-amino-acid chain: tRNA1(Val) (adenine(37)-N6)-methyltransferase (240 aa).

This sequence belongs to the methyltransferase superfamily. tRNA (adenine-N(6)-)-methyltransferase family.

Its subcellular location is the cytoplasm. The enzyme catalyses adenosine(37) in tRNA1(Val) + S-adenosyl-L-methionine = N(6)-methyladenosine(37) in tRNA1(Val) + S-adenosyl-L-homocysteine + H(+). Its function is as follows. Specifically methylates the adenine in position 37 of tRNA(1)(Val) (anticodon cmo5UAC). The chain is tRNA1(Val) (adenine(37)-N6)-methyltransferase from Vibrio cholerae serotype O1 (strain ATCC 39315 / El Tor Inaba N16961).